Reading from the N-terminus, the 706-residue chain is Ribosomal RNA large subunit methyltransferase K/L (706 aa).

The region spanning Leu43 to Leu154 is the THUMP domain.

This sequence belongs to the methyltransferase superfamily. RlmKL family.

Its subcellular location is the cytoplasm. The enzyme catalyses guanosine(2445) in 23S rRNA + S-adenosyl-L-methionine = N(2)-methylguanosine(2445) in 23S rRNA + S-adenosyl-L-homocysteine + H(+). It catalyses the reaction guanosine(2069) in 23S rRNA + S-adenosyl-L-methionine = N(2)-methylguanosine(2069) in 23S rRNA + S-adenosyl-L-homocysteine + H(+). Its function is as follows. Specifically methylates the guanine in position 2445 (m2G2445) and the guanine in position 2069 (m7G2069) of 23S rRNA. This chain is Ribosomal RNA large subunit methyltransferase K/L, found in Yersinia pseudotuberculosis serotype O:1b (strain IP 31758).